Here is a 274-residue protein sequence, read N- to C-terminus: Dermonecrotic toxin SdSicTox-betaIIB1biii (274 aa).

H5 is an active-site residue. Mg(2+)-binding residues include E25 and D27. Catalysis depends on H41, which acts as the Nucleophile. Cystine bridges form between C45/C51 and C47/C190. D85 lines the Mg(2+) pocket.

The protein belongs to the arthropod phospholipase D family. Class II subfamily. The cofactor is Mg(2+). As to expression, expressed by the venom gland.

It localises to the secreted. It catalyses the reaction an N-(acyl)-sphingosylphosphocholine = an N-(acyl)-sphingosyl-1,3-cyclic phosphate + choline. It carries out the reaction an N-(acyl)-sphingosylphosphoethanolamine = an N-(acyl)-sphingosyl-1,3-cyclic phosphate + ethanolamine. The catalysed reaction is a 1-acyl-sn-glycero-3-phosphocholine = a 1-acyl-sn-glycero-2,3-cyclic phosphate + choline. The enzyme catalyses a 1-acyl-sn-glycero-3-phosphoethanolamine = a 1-acyl-sn-glycero-2,3-cyclic phosphate + ethanolamine. Functionally, dermonecrotic toxins cleave the phosphodiester linkage between the phosphate and headgroup of certain phospholipids (sphingolipid and lysolipid substrates), forming an alcohol (often choline) and a cyclic phosphate. This toxin acts on sphingomyelin (SM). It may also act on ceramide phosphoethanolamine (CPE), lysophosphatidylcholine (LPC) and lysophosphatidylethanolamine (LPE), but not on lysophosphatidylserine (LPS), and lysophosphatidylglycerol (LPG). It acts by transphosphatidylation, releasing exclusively cyclic phosphate products as second products. Induces dermonecrosis, hemolysis, increased vascular permeability, edema, inflammatory response, and platelet aggregation. The polypeptide is Dermonecrotic toxin SdSicTox-betaIIB1biii (Sicarius cf. damarensis (strain GJB-2008) (Six-eyed sand spider)).